The chain runs to 872 residues: DNA mismatch repair protein MutS (872 aa).

602 to 609 is a binding site for ATP; that stretch reads GPNMSGKS.

It belongs to the DNA mismatch repair MutS family.

This protein is involved in the repair of mismatches in DNA. It is possible that it carries out the mismatch recognition step. This protein has a weak ATPase activity. In Staphylococcus aureus (strain MRSA252), this protein is DNA mismatch repair protein MutS.